Consider the following 349-residue polypeptide: Galanin receptor type 1 (349 aa).

Over 1-36 (MELAVGNLSEGNASWPEPPAPEPGPLFGIGVENFVT) the chain is Extracellular. 2 N-linked (GlcNAc...) asparagine glycosylation sites follow: N7 and N12. The helical transmembrane segment at 37 to 57 (LVVFGLIFALGVLGNSLVITV) threads the bilayer. Topologically, residues 58–70 (LARSKPGKPRSTT) are cytoplasmic. The chain crosses the membrane as a helical span at residues 71-91 (NLFILNLSIADLAYLLFCIPF). Topologically, residues 92–109 (QATVYALPTWVLGAFICK) are extracellular. A disulfide bridge links C108 with C187. A helical transmembrane segment spans residues 110–131 (FIHYFFTVSMLVSIFTLAAMSV). The Cytoplasmic segment spans residues 132-151 (DRYVAIVHSRRSSSLRVSRN). Residues 152 to 172 (ALLGVGCIWALSIAMASPVAY) traverse the membrane as a helical segment. The Extracellular portion of the chain corresponds to 173-200 (HQGLFHPRASNQTFCWEQWPDPRHKKAY). Residue N183 is glycosylated (N-linked (GlcNAc...) asparagine). Residues 201–221 (VVCTFVFGYLLPLLLICFCYA) form a helical membrane-spanning segment. Residues 222–248 (KVLNHLHKKLKNMSKKSEASKKKTAQT) are Cytoplasmic-facing. The chain crosses the membrane as a helical span at residues 249–269 (VLVVVVVFGISWLPHHIIHLW). The Extracellular segment spans residues 270–271 (AE). Residues 272–292 (FGVFPLTPASFLFRITAHCLA) form a helical membrane-spanning segment. Residues 293 to 349 (YSNSSVNPIIYAFLSENFRKAYKQVFKCHIRKDSHLSDTKESKSRIDTPPSTNCTHV) are Cytoplasmic-facing. A lipid anchor (S-palmitoyl cysteine) is attached at C320.

It belongs to the G-protein coupled receptor 1 family. As to quaternary structure, interacts with GRP39 AND HTR1A. In terms of processing, palmitoylated on at least one of the three cysteine residues present in the C-terminal part.

The protein localises to the cell membrane. In terms of biological role, receptor for the hormone galanin. The activity of this receptor is mediated by G proteins that inhibit adenylate cyclase activity. In Homo sapiens (Human), this protein is Galanin receptor type 1 (GALR1).